Here is a 65-residue protein sequence, read N- to C-terminus: Gene 51 protein (65 aa).

The protein is Gene 51 protein (51) of Mycobacterium phage D29 (Mycobacteriophage D29).